A 564-amino-acid polypeptide reads, in one-letter code: Potassium-transporting ATPase potassium-binding subunit (564 aa).

The next 10 membrane-spanning stretches (helical) occupy residues 4-24 (YDYL…PWLG), 67-87 (TLAL…VLLL), 135-155 (IGLT…LVAL), 179-199 (LYGL…QGVP), 258-278 (FEVA…GHYV), 286-306 (AIIA…LWSE), 382-402 (AGLY…GLMI), 420-440 (LLVA…AIAA), 487-507 (VMIG…VLAL), and 534-554 (LLLL…LALG).

Belongs to the KdpA family. As to quaternary structure, the system is composed of three essential subunits: KdpA, KdpB and KdpC.

It localises to the cell inner membrane. Its function is as follows. Part of the high-affinity ATP-driven potassium transport (or Kdp) system, which catalyzes the hydrolysis of ATP coupled with the electrogenic transport of potassium into the cytoplasm. This subunit binds the periplasmic potassium ions and delivers the ions to the membrane domain of KdpB through an intramembrane tunnel. The polypeptide is Potassium-transporting ATPase potassium-binding subunit (Pseudomonas entomophila (strain L48)).